The following is a 574-amino-acid chain: Frizzled and smoothened-like protein G (574 aa).

The first 19 residues, 1 to 19, serve as a signal peptide directing secretion; it reads MKSIIFITFFIFFLKKLNG. The Extracellular portion of the chain corresponds to 20-246; the sequence is LPNGYGVGLV…EKWNQIENLS (227 aa). The region spanning 30–181 is the FZ domain; that stretch reads DPNGQCMNYI…GLYEVPCFNP (152 aa). 4 disulfides stabilise this stretch: C35-C109, C48-C102, C91-C138, and C127-C178. N119, N161, N187, N206, N233, and N244 each carry an N-linked (GlcNAc...) asparagine glycan. The chain crosses the membrane as a helical span at residues 247-267; it reads KVLSTISFVCSIYNILSFGIL. At 268–273 the chain is on the cytoplasmic side; the sequence is KKKKTK. The chain crosses the membrane as a helical span at residues 274–294; that stretch reads YTICISALSASVALINLGDII. Residues 295–324 lie on the Extracellular side of the membrane; the sequence is KIGVGYEKVLCPEPGRFATQVDDPLCGLTA. Residues 325–345 form a helical membrane-spanning segment; the sequence is ALFHVGICSTVLWTTTMAIYL. Topologically, residues 346-358 are cytoplasmic; that stretch reads YSAIKNIKLFKFR. A helical membrane pass occupies residues 359-379; it reads YFIIFNTGFSLTSLIIAASAS. At 380 to 401 the chain is on the extracellular side; sequence KFEAGTGSIECWIRDRWYSICL. The helical transmembrane segment at 402-422 threads the bilayer; the sequence is FWLPCGICLLIGTICIASVIV. The Cytoplasmic portion of the chain corresponds to 423–445; that stretch reads EIYKVSKNIKLSESETIMRQIKP. A helical membrane pass occupies residues 446-466; sequence IISVILVSGSFTYLFIIFFDI. The Extracellular segment spans residues 467 to 502; it reads ERNFGGYRSAVTDYVLCLLNSTDNGIECHTSGPSYN. N-linked (GlcNAc...) asparagine glycosylation is present at N486. Residues 503–523 form a helical membrane-spanning segment; sequence PYFMFYFFMRFFGILFFLIYG. Topologically, residues 524–574 are cytoplasmic; sequence TSKNARDSWYELFIKIKVSLSETSSTISNNSGGGSSQQKQQQQNEIKLEKI. Positions 550–568 are enriched in low complexity; the sequence is ISNNSGGGSSQQKQQQQNE. Residues 550-574 form a disordered region; that stretch reads ISNNSGGGSSQQKQQQQNEIKLEKI.

It belongs to the G-protein coupled receptor Fz/Smo family.

It localises to the membrane. This is Frizzled and smoothened-like protein G (fslG) from Dictyostelium discoideum (Social amoeba).